We begin with the raw amino-acid sequence, 251 residues long: Ribosomal RNA small subunit methyltransferase J (251 aa).

S-adenosyl-L-methionine is bound by residues 100–101 (RD), 116–117 (ER), and D170.

It belongs to the methyltransferase superfamily. RsmJ family.

It is found in the cytoplasm. The enzyme catalyses guanosine(1516) in 16S rRNA + S-adenosyl-L-methionine = N(2)-methylguanosine(1516) in 16S rRNA + S-adenosyl-L-homocysteine + H(+). Specifically methylates the guanosine in position 1516 of 16S rRNA. The sequence is that of Ribosomal RNA small subunit methyltransferase J from Haemophilus ducreyi (strain 35000HP / ATCC 700724).